The sequence spans 210 residues: N-(5'-phosphoribosyl)anthranilate isomerase (210 aa).

It belongs to the TrpF family.

It carries out the reaction N-(5-phospho-beta-D-ribosyl)anthranilate = 1-(2-carboxyphenylamino)-1-deoxy-D-ribulose 5-phosphate. It functions in the pathway amino-acid biosynthesis; L-tryptophan biosynthesis; L-tryptophan from chorismate: step 3/5. In Nostoc punctiforme (strain ATCC 29133 / PCC 73102), this protein is N-(5'-phosphoribosyl)anthranilate isomerase.